The chain runs to 549 residues: Endoplasmic reticulum mannosyl-oligosaccharide 1,2-alpha-mannosidase (549 aa).

The Cytoplasmic segment spans residues 1 to 4 (MKNS). The helical; Signal-anchor for type II membrane protein transmembrane segment at 5–24 (VGISIATIVAIIAAIYYVPW) threads the bilayer. At 25–354 (YEHFERKSPG…LLASGSTEGL (330 aa)) the chain is on the lumenal side. N-linked (GlcNAc...) asparagine glycosylation is found at Asn96, Asn155, and Asn224. Cys340 and Cys385 are oxidised to a cystine. Glu399 serves as the catalytic Proton donor. Cys468 and Cys471 are disulfide-bonded. Position 525 (Thr525) interacts with Ca(2+).

This sequence belongs to the glycosyl hydrolase 47 family. In terms of assembly, homodimer. It depends on Ca(2+) as a cofactor.

The protein resides in the endoplasmic reticulum membrane. It catalyses the reaction N(4)-(alpha-D-Man-(1-&gt;2)-alpha-D-Man-(1-&gt;2)-alpha-D-Man-(1-&gt;3)-[alpha-D-Man-(1-&gt;2)-alpha-D-Man-(1-&gt;3)-[alpha-D-Man-(1-&gt;2)-alpha-D-Man-(1-&gt;6)]-alpha-D-Man-(1-&gt;6)]-beta-D-Man-(1-&gt;4)-beta-D-GlcNAc-(1-&gt;4)-beta-D-GlcNAc)-L-asparaginyl-[protein] (N-glucan mannose isomer 9A1,2,3B1,2,3) + 4 H2O = N(4)-(alpha-D-Man-(1-&gt;3)-[alpha-D-Man-(1-&gt;3)-[alpha-D-Man-(1-&gt;6)]-alpha-D-Man-(1-&gt;6)]-beta-D-Man-(1-&gt;4)-beta-D-GlcNAc-(1-&gt;4)-beta-D-GlcNAc)-L-asparaginyl-[protein] (N-glucan mannose isomer 5A1,2) + 4 beta-D-mannose. It carries out the reaction N(4)-(alpha-D-Man-(1-&gt;2)-alpha-D-Man-(1-&gt;2)-alpha-D-Man-(1-&gt;3)-[alpha-D-Man-(1-&gt;3)-[alpha-D-Man-(1-&gt;2)-alpha-D-Man-(1-&gt;6)]-alpha-D-Man-(1-&gt;6)]-beta-D-Man-(1-&gt;4)-beta-D-GlcNAc-(1-&gt;4)-beta-D-GlcNAc)-L-asparaginyl-[protein] (N-glucan mannose isomer 8A1,2,3B1,3) + 3 H2O = N(4)-(alpha-D-Man-(1-&gt;3)-[alpha-D-Man-(1-&gt;3)-[alpha-D-Man-(1-&gt;6)]-alpha-D-Man-(1-&gt;6)]-beta-D-Man-(1-&gt;4)-beta-D-GlcNAc-(1-&gt;4)-beta-D-GlcNAc)-L-asparaginyl-[protein] (N-glucan mannose isomer 5A1,2) + 3 beta-D-mannose. It functions in the pathway protein modification; protein glycosylation. Involved in glycoprotein quality control as it is important for the targeting of misfolded glycoproteins for degradation. It primarily trims a single alpha-1,2-linked mannose residue from Man(9)GlcNAc(2) to produce Man(8)GlcNAc(2), but at high enzyme concentrations it further trims the carbohydrates to Man(5)GlcNAc(2). This Saccharomyces cerevisiae (strain ATCC 204508 / S288c) (Baker's yeast) protein is Endoplasmic reticulum mannosyl-oligosaccharide 1,2-alpha-mannosidase (MNS1).